We begin with the raw amino-acid sequence, 275 residues long: Adenylate kinase 2 (275 aa).

Gly-2 carries N-myristoyl glycine lipidation. Residues 21 to 30 are required for cell membrane translocation but dispensable for cell membrane localization; the sequence is KKKEKKKKKK. 39-44 provides a ligand contact to ATP; the sequence is GSGKDT. The interval 59-97 is NMP; that stretch reads CISKLLKEYKEEYNKENVLNEEENYFDEIEKCMIDGSLV. Residues 95–97, 126–129, and Gln-133 each bind AMP; these read SLV and GFPR. Arg-164 serves as a coordination point for ATP. An LID region spans residues 165-214; that stretch reads IIDPITNISYNENIIQIIKKKREGQELSDKEQKQLIIDNHLYNNLSNDIL. The AMP site is built by Arg-220 and Arg-231.

It belongs to the adenylate kinase family. As to quaternary structure, monomer. Oligomer. Heterodimer composed of NMT and AK2; AK2 myristoylation stabilizes the complex. Myristoylation is required for cell membrane localization. Post-translationally, may be palmitoylated at Cys-4 which stabilizes cell membrane localization of the myristoylated protein.

The protein localises to the parasitophorous vacuole membrane. The catalysed reaction is AMP + ATP = 2 ADP. Catalyzes the reversible transfer of the terminal phosphate group between ATP and AMP. Has very low activity with CTP, GTP, ITP and UTP and no activity with GMP, UMP or IMP in vitro. The chain is Adenylate kinase 2 from Plasmodium falciparum (isolate 3D7).